Reading from the N-terminus, the 247-residue chain is Cell division protein ZapD (247 aa).

It belongs to the ZapD family. As to quaternary structure, interacts with FtsZ.

The protein localises to the cytoplasm. Functionally, cell division factor that enhances FtsZ-ring assembly. Directly interacts with FtsZ and promotes bundling of FtsZ protofilaments, with a reduction in FtsZ GTPase activity. In Shigella flexneri, this protein is Cell division protein ZapD.